The chain runs to 179 residues: UPF0227 protein Swoo_1808 (179 aa).

It belongs to the UPF0227 family.

The sequence is that of UPF0227 protein Swoo_1808 from Shewanella woodyi (strain ATCC 51908 / MS32).